The sequence spans 144 residues: Superoxide dismutase [Mn], mitochondrial (144 aa).

The Mn(2+) site is built by histidine 10, histidine 58, and aspartate 143.

It belongs to the iron/manganese superoxide dismutase family. As to quaternary structure, homotetramer. The cofactor is Mn(2+).

It is found in the mitochondrion matrix. The enzyme catalyses 2 superoxide + 2 H(+) = H2O2 + O2. Its function is as follows. Destroys superoxide anion radicals which are normally produced within the cells and which are toxic to biological systems. The polypeptide is Superoxide dismutase [Mn], mitochondrial (Palinurus vulgaris (European spiny lobster)).